Here is a 70-residue protein sequence, read N- to C-terminus: Small ribosomal subunit protein bS21 (70 aa).

Belongs to the bacterial ribosomal protein bS21 family.

The polypeptide is Small ribosomal subunit protein bS21 (Albidiferax ferrireducens (strain ATCC BAA-621 / DSM 15236 / T118) (Rhodoferax ferrireducens)).